Consider the following 89-residue polypeptide: Dynein light chain 1, cytoplasmic (89 aa).

It belongs to the dynein light chain family. In terms of assembly, interacts with mett-10; the interaction is direct, and is required for the nuclear localization of mett-10. Component of a dynein-regulating complex composed of at least bicd-1, dlc-1 and egal-1. Interacts with egal-1 and unc-83. Interacts with fbf-2. As to expression, broadly expressed in tissues including the intestine, body wall muscles, germs cells, oocytes, the rectal valve and cells in the head.

It is found in the cytoplasm. The protein localises to the cytoskeleton. It localises to the nucleus envelope. Its subcellular location is the cytoplasmic granule. In terms of biological role, acts as a non-catalytic accessory component of a dynein complex. Part of a complex with bicd-1 and egal-1, which is recruited to the nuclear envelope by unc-83, where in turn, it recruits dynein to the nuclear surface and regulates nuclear migrations in hypodermal precursor cells. Probably within a dynein motor complex, plays a role in the cell fate specification of the germline and oogenesis. In particular, it inhibits germ cell proliferation. Regulates the function and localization of the RNA-binding protein fbf-2 in the germline. Plays a role in mitotic and meiotic processes. Involved in the pairing of homologous chromosomes. Independently of its dynein-mediated functions, plays a role in germ cell apoptosis. The chain is Dynein light chain 1, cytoplasmic from Caenorhabditis elegans.